A 273-amino-acid chain; its full sequence is Embryonic polyadenylate-binding protein 2 (273 aa).

The disordered stretch occupies residues serine 22–glutamate 57. An RRM domain is found at arginine 143 to threonine 220.

The protein localises to the cytoplasm. Its function is as follows. Binds the poly(A) tail of mRNA. This is Embryonic polyadenylate-binding protein 2 (Pabpn1l) from Mus musculus (Mouse).